The chain runs to 295 residues: sn-glycerol-3-phosphate transport system permease protein UgpA (295 aa).

Over Met-1–Arg-11 the chain is Cytoplasmic. A helical transmembrane segment spans residues Trp-12–Pro-32. At Ala-33–Thr-80 the chain is on the periplasmic side. Positions Ile-76 to Gln-284 constitute an ABC transmembrane type-1 domain. The chain crosses the membrane as a helical span at residues Phe-81–Val-101. The Cytoplasmic portion of the chain corresponds to Arg-102 to Thr-109. A helical membrane pass occupies residues Leu-110–Phe-130. The Periplasmic segment spans residues Asn-131–Gln-156. A helical membrane pass occupies residues Ala-157 to Phe-177. Topologically, residues Tyr-178–Ala-207 are cytoplasmic. A helical membrane pass occupies residues Leu-208–Phe-228. Over Asp-229–Asp-262 the chain is Periplasmic. Residues Leu-263–Val-283 form a helical membrane-spanning segment. Residues Gln-284–Gln-295 lie on the Cytoplasmic side of the membrane.

The protein belongs to the binding-protein-dependent transport system permease family. UgpAE subfamily. In terms of assembly, the complex is composed of two ATP-binding proteins (UgpC), two transmembrane proteins (UgpA and UgpE) and a solute-binding protein (UgpB).

The protein localises to the cell inner membrane. Functionally, part of the ABC transporter complex UgpBAEC involved in sn-glycerol-3-phosphate (G3P) import. Probably responsible for the translocation of the substrate across the membrane. The chain is sn-glycerol-3-phosphate transport system permease protein UgpA (ugpA) from Escherichia coli (strain UTI89 / UPEC).